A 245-amino-acid polypeptide reads, in one-letter code: Adenylate kinase (245 aa).

15–20 (GSGKGT) lines the ATP pocket. The segment at 35–64 (SSGDLLRDAVSKDTPLSQEIKSYLDQGKLL) is NMP. Residues serine 36, arginine 41, 62-64 (KLL), 103-106 (GFPR), and glutamine 110 each bind AMP. Residues 143-176 (SRYICPACQGIYNEQQGFSSCPKCSVELIRRSDD) are LID. Arginine 144 is a binding site for ATP. Zn(2+) contacts are provided by cysteine 147 and cysteine 150. 153-154 (IY) provides a ligand contact to ATP. Cysteine 163 and cysteine 166 together coordinate Zn(2+). Arginine 173 and arginine 184 together coordinate AMP. Alanine 212 provides a ligand contact to ATP.

The protein belongs to the adenylate kinase family. In terms of assembly, monomer.

It localises to the cytoplasm. The catalysed reaction is AMP + ATP = 2 ADP. The protein operates within purine metabolism; AMP biosynthesis via salvage pathway; AMP from ADP: step 1/1. Functionally, catalyzes the reversible transfer of the terminal phosphate group between ATP and AMP. Plays an important role in cellular energy homeostasis and in adenine nucleotide metabolism. The sequence is that of Adenylate kinase from Chlamydia trachomatis serovar A (strain ATCC VR-571B / DSM 19440 / HAR-13).